Reading from the N-terminus, the 381-residue chain is Neuropeptide Y receptor type 2 (381 aa).

Residues 1-37 (MGPVGAEADENQTVEVKVEPYGPGHTTPRGELPPDPE) are disordered. Residues 1 to 51 (MGPVGAEADENQTVEVKVEPYGPGHTTPRGELPPDPEPELIDSTKLVEVQV) are Extracellular-facing. N-linked (GlcNAc...) asparagine glycosylation is present at N11. Residues 52-72 (ILILAYCSIILLGVVGNSLVI) form a helical membrane-spanning segment. The Cytoplasmic segment spans residues 73–86 (HVVIKFKSMRTVTN). The chain crosses the membrane as a helical span at residues 87–107 (FFIANLAVADLLVNTLCLPFT). At 108–124 (LTYTLMGEWKMGPVLCH) the chain is on the extracellular side. A disulfide bond links C123 and C203. Residues 125–145 (LVPYAQGLAVQVSTITLTVIA) traverse the membrane as a helical segment. Residues 146–165 (LDRHRCIVYHLESKISKRIS) lie on the Cytoplasmic side of the membrane. A helical membrane pass occupies residues 166–186 (FLIIGLAWGISALLASPLAIF). Residues 187–216 (REYSLIEIIPDFEIVACTEKWPGEEKSVYG) lie on the Extracellular side of the membrane. A helical transmembrane segment spans residues 217–237 (TVYSLSTLLILYVLPLGIISF). Topologically, residues 238 to 268 (SYTRIWSKLRNHVSPGAASDHYHQRRHKMTK) are cytoplasmic. The helical transmembrane segment at 269–289 (MLVCVVVVFAVSWLPLHAFQL) threads the bilayer. At 290–304 (AVDIDSHVLDLKEYK) the chain is on the extracellular side. The chain crosses the membrane as a helical span at residues 305–325 (LIFTVFHIIAMCSTFANPLLY). Over 326–381 (GWMNSNYRKAFLSAFRCEQRLDAIHSEVSMTFKAKKNLEVKKNNGPTDSFSEATNV) the chain is Cytoplasmic. C342 is lipidated: S-palmitoyl cysteine.

The protein belongs to the G-protein coupled receptor 1 family.

The protein resides in the cell membrane. Its function is as follows. Receptor for neuropeptide Y and peptide YY. In Mus musculus (Mouse), this protein is Neuropeptide Y receptor type 2 (Npy2r).